A 429-amino-acid chain; its full sequence is Histidine--tRNA ligase (429 aa).

Belongs to the class-II aminoacyl-tRNA synthetase family. Homodimer.

It is found in the cytoplasm. The enzyme catalyses tRNA(His) + L-histidine + ATP = L-histidyl-tRNA(His) + AMP + diphosphate + H(+). The polypeptide is Histidine--tRNA ligase (Streptococcus pneumoniae serotype 19F (strain G54)).